A 218-amino-acid polypeptide reads, in one-letter code: Glutathione S-transferase Mu 2 (218 aa).

The 87-residue stretch at 2-88 folds into the GST N-terminal domain; that stretch reads PIILGYWNIR…YIARKHNLCG (87 aa). 7 to 8 contacts glutathione; it reads YW. A phosphoserine mark is found at S27 and S44. Residues 43–46, K50, 59–60, and 72–73 each bind glutathione; these read RSQW, NL, and QS. The GST C-terminal domain maps to 90 to 208; it reads TEKEKIQEDI…KSSRFLPRPV (119 aa). Position 116 (Y116) interacts with substrate.

This sequence belongs to the GST superfamily. Mu family. In terms of assembly, homodimer.

It localises to the cytoplasm. It carries out the reaction RX + glutathione = an S-substituted glutathione + a halide anion + H(+). It catalyses the reaction 11(S)-hydroxy-14(S),15(S)-epoxy-(5Z,8Z,12E)-eicosatrienoate + glutathione = (11S,15S)-dihydroxy-14(R)-S-glutathionyl-(5Z,8Z,12E)-eicosatrienoate. Functionally, conjugation of reduced glutathione to a wide number of exogenous and endogenous hydrophobic electrophiles. Participates in the formation of novel hepoxilin regioisomers. The protein is Glutathione S-transferase Mu 2 (GSTM2) of Pongo abelii (Sumatran orangutan).